We begin with the raw amino-acid sequence, 204 residues long: Large ribosomal subunit protein bL25 (204 aa).

It belongs to the bacterial ribosomal protein bL25 family. CTC subfamily. Part of the 50S ribosomal subunit; part of the 5S rRNA/L5/L18/L25 subcomplex. Contacts the 5S rRNA. Binds to the 5S rRNA independently of L5 and L18.

In terms of biological role, this is one of the proteins that binds to the 5S RNA in the ribosome where it forms part of the central protuberance. In Pseudomonas paraeruginosa (strain DSM 24068 / PA7) (Pseudomonas aeruginosa (strain PA7)), this protein is Large ribosomal subunit protein bL25.